The sequence spans 419 residues: Pregnancy-specific beta-1-glycoprotein 4 (419 aa).

An N-terminal signal peptide occupies residues 1 to 34 (MGPLSAPPCTQRITWKGVLLTASLLNFWNPPTTA). The 110-residue stretch at 35–144 (QVTIEAQPPK…TGHFTFTLHL (110 aa)) folds into the Ig-like V-type domain. Residues Asn-104, Asn-111, Asn-199, Asn-268, Asn-299, and Asn-303 are each glycosylated (N-linked (GlcNAc...) asparagine). 3 Ig-like C2-type domains span residues 147–234 (PKPS…VTLN), 237–327 (PKLS…VTLN), and 332–410 (PDLP…KSIT). 3 disulfide bridges follow: Cys-169–Cys-217, Cys-262–Cys-310, and Cys-354–Cys-394.

The protein belongs to the immunoglobulin superfamily. CEA family.

It localises to the secreted. This is Pregnancy-specific beta-1-glycoprotein 4 (PSG4) from Homo sapiens (Human).